Consider the following 163-residue polypeptide: Nucleotide-binding protein LBJ_2391 (163 aa).

Belongs to the YajQ family.

In terms of biological role, nucleotide-binding protein. This chain is Nucleotide-binding protein LBJ_2391, found in Leptospira borgpetersenii serovar Hardjo-bovis (strain JB197).